A 101-amino-acid chain; its full sequence is Small ribosomal subunit protein uS14 (101 aa).

This sequence belongs to the universal ribosomal protein uS14 family. In terms of assembly, part of the 30S ribosomal subunit. Contacts proteins S3 and S10.

Its function is as follows. Binds 16S rRNA, required for the assembly of 30S particles and may also be responsible for determining the conformation of the 16S rRNA at the A site. This Burkholderia lata (strain ATCC 17760 / DSM 23089 / LMG 22485 / NCIMB 9086 / R18194 / 383) protein is Small ribosomal subunit protein uS14.